The chain runs to 185 residues: Inner membrane-spanning protein YciB (185 aa).

The next 5 membrane-spanning stretches (helical) occupy residues 27–47 (IVLV…YGIV), 53–73 (IMAS…EIRY), 76–96 (WKVT…QFQF), 118–138 (TLNL…IYIS), and 149–169 (FKSF…GVYI).

Belongs to the YciB family.

It is found in the cell inner membrane. In terms of biological role, plays a role in cell envelope biogenesis, maintenance of cell envelope integrity and membrane homeostasis. The sequence is that of Inner membrane-spanning protein YciB from Haemophilus influenzae (strain 86-028NP).